We begin with the raw amino-acid sequence, 276 residues long: Tyrosinase (276 aa).

Positions 38, 56, 66, 193, 197, and 219 each coordinate Cu cation.

This sequence belongs to the tyrosinase family. It depends on Cu(2+) as a cofactor.

The enzyme catalyses 2 L-dopa + O2 = 2 L-dopaquinone + 2 H2O. The catalysed reaction is L-tyrosine + O2 = L-dopaquinone + H2O. This is a copper-containing oxidase that functions in the formation of pigments such as melanins and other polyphenolic compounds. The polypeptide is Tyrosinase (melC2) (Streptomyces galbus).